Here is a 391-residue protein sequence, read N- to C-terminus: Ferrochelatase (391 aa).

Residues His-196 and Glu-281 each coordinate Fe cation.

This sequence belongs to the ferrochelatase family.

It is found in the cytoplasm. It catalyses the reaction heme b + 2 H(+) = protoporphyrin IX + Fe(2+). It participates in porphyrin-containing compound metabolism; protoheme biosynthesis; protoheme from protoporphyrin-IX: step 1/1. Its function is as follows. Catalyzes the ferrous insertion into protoporphyrin IX. The polypeptide is Ferrochelatase (Prochlorococcus marinus (strain NATL1A)).